The primary structure comprises 479 residues: MVKLAHLLVATFGVLLVLNGCLARQSLGVPPQLGNACNLDNLDVLQPTETIKSEAGRLEYWDHNHPQLRCAGVSVSRLIIEQGGLYLPTFFSSPKIAYVVQGMGISGRVVPGCAETFMDSQPMQGQGQQGQQGQQGQQQQGFRDMHQKVEHVRHGDVIAITAGSAHWIYNTGDQPLVIVCLLDIANYQNQLDRNPRTFRLAGNNPQGGSHQQQQQQQQNMLSGFDPQVLAQALKMQLRLAQELQNQQDNRGNIVRVKGPFQVVRPPLRQQYESEQWRHPRGPPQSPQDNGLEETICSMRTHENIDDPARADVYKPNLGRVTSVNSYTLPILQYIRLSATRGILQGNAMVLPKYNMNANEILYCTQGQARIQVVNDNGQNVLDQQVQKGQLVVIPQGFAYVVQSHGNNFEWISFKTNANAMVSTLAGRTSALRALPLEVITNAFQISLEEARRIKFNTPETTLTHARGGQPQLIEEIVEA.

The N-terminal stretch at 1–23 (MVKLAHLLVATFGVLLVLNGCLA) is a signal peptide. Disulfide bonds link Cys37–Cys70 and Cys113–Cys296. The region spanning 42–241 (LDVLQPTETI…ALKMQLRLAQ (200 aa)) is the Cupin type-1 1 domain. Thr116 carries the post-translational modification Phosphothreonine. 3 disordered regions span residues 117–144 (FMDSQPMQGQGQQGQQGQQGQQQQGFRD), 196–219 (RTFRLAGNNPQGGSHQQQQQQQQN), and 271–291 (YESEQWRHPRGPPQSPQDNGL). The span at 124–141 (QGQGQQGQQGQQGQQQQG) shows a compositional bias: low complexity. Residues 302–451 (ENIDDPARAD…AFQISLEEAR (150 aa)) enclose the Cupin type-1 2 domain. Residues Thr415 and Thr440 each carry the phosphothreonine modification.

This sequence belongs to the 11S seed storage protein (globulins) family. In terms of assembly, hexamer; each subunit is composed of an acidic and a basic chain derived from a single precursor and linked by a disulfide bond.

In terms of biological role, this is a seed storage protein. In Raphanus sativus (Radish), this protein is Cruciferin PGCRURSE5 (CRURS).